Reading from the N-terminus, the 192-residue chain is Peptidyl-tRNA hydrolase (192 aa).

Y17 provides a ligand contact to tRNA. The active-site Proton acceptor is the H22. TRNA contacts are provided by F68, N70, and N116.

The protein belongs to the PTH family. Monomer.

Its subcellular location is the cytoplasm. It catalyses the reaction an N-acyl-L-alpha-aminoacyl-tRNA + H2O = an N-acyl-L-amino acid + a tRNA + H(+). Functionally, hydrolyzes ribosome-free peptidyl-tRNAs (with 1 or more amino acids incorporated), which drop off the ribosome during protein synthesis, or as a result of ribosome stalling. In terms of biological role, catalyzes the release of premature peptidyl moieties from peptidyl-tRNA molecules trapped in stalled 50S ribosomal subunits, and thus maintains levels of free tRNAs and 50S ribosomes. This is Peptidyl-tRNA hydrolase from Hydrogenovibrio crunogenus (strain DSM 25203 / XCL-2) (Thiomicrospira crunogena).